Reading from the N-terminus, the 415-residue chain is Squalene synthase 11 (415 aa).

Helical transmembrane passes span 281–301 (AIFR…ALCF) and 392–412 (LIII…SNLP).

This sequence belongs to the phytoene/squalene synthase family. The cofactor is Mg(2+). Requires Mn(2+) as cofactor.

The protein resides in the endoplasmic reticulum membrane. It carries out the reaction 2 (2E,6E)-farnesyl diphosphate + NADH + H(+) = squalene + 2 diphosphate + NAD(+). The enzyme catalyses 2 (2E,6E)-farnesyl diphosphate + NADPH + H(+) = squalene + 2 diphosphate + NADP(+). It functions in the pathway terpene metabolism; lanosterol biosynthesis; lanosterol from farnesyl diphosphate: step 1/3. Its function is as follows. Component of the triterpene saponins (e.g. ginsenosides or panaxosides) and phytosterols biosynthetic pathways. Catalyzes the biosynthesis of squalene. The sequence is that of Squalene synthase 11 from Panax ginseng (Korean ginseng).